The following is a 302-amino-acid chain: Acetylglutamate kinase (302 aa).

Residues 55–56 (GG), arginine 77, and asparagine 176 each bind substrate.

Belongs to the acetylglutamate kinase family. ArgB subfamily.

Its subcellular location is the cytoplasm. The enzyme catalyses N-acetyl-L-glutamate + ATP = N-acetyl-L-glutamyl 5-phosphate + ADP. The protein operates within amino-acid biosynthesis; L-arginine biosynthesis; N(2)-acetyl-L-ornithine from L-glutamate: step 2/4. In terms of biological role, catalyzes the ATP-dependent phosphorylation of N-acetyl-L-glutamate. This is Acetylglutamate kinase from Corynebacterium efficiens (strain DSM 44549 / YS-314 / AJ 12310 / JCM 11189 / NBRC 100395).